The primary structure comprises 349 residues: MYISNLRLQNFRNIPAKSFDFKNSINFIVGKNGSGKTSILESIYFLSHSRSFRSSQLNRIINHNADEFIIYTKAYNPDEITISLSRKKNSNNISKLNLEIQKNHTEITRNLPIQLINPESFNIINSGAQQRCKVIDWGAFYLDKTFLKIWQQTKFLVKQRNSALKQNYPYSYILSIDKKLCEFAEILDYKRQAYFTKLKPKIYEILSHFNPNLQLDIDYFRGWNLHKSLAQVLEESFNYDNKYKVTNHGPHKADIVLSVSHKPIQDIFSRGQQKLLICALKLAQGEIHNSENDNKCIYLIDDITSELDSIHTLTLFNYLKQLKSQVFITTTEKNKINEFIDTNSYILEI.

An ATP-binding site is contributed by 30-37 (GKNGSGKT).

It belongs to the RecF family.

It is found in the cytoplasm. In terms of biological role, the RecF protein is involved in DNA metabolism; it is required for DNA replication and normal SOS inducibility. RecF binds preferentially to single-stranded, linear DNA. It also seems to bind ATP. The polypeptide is DNA replication and repair protein RecF (Francisella tularensis subsp. holarctica (strain FTNF002-00 / FTA)).